The chain runs to 344 residues: Transcription factor HHO3 (344 aa).

Disordered stretches follow at residues 90-122 (KWSSASSDETDKDEEAEKTEMMTNENNDGDKKK) and 156-212 (AFQP…KQRR). A compositionally biased stretch (acidic residues) spans 97–106 (DETDKDEEAE). A compositionally biased stretch (low complexity) spans 178-188 (TPTSTTTTSST). Residues 206 to 266 (SNRKQRRCWS…HLQKYRLHTR (61 aa)) form the HTH myb-type domain. A DNA-binding region (H-T-H motif) is located at residues 237–262 (PKQIRDLMKVDGLTNDEVKSHLQKYR). Positions 306 to 344 (PVATQPPQSSTSGERSNRGCKSPATSSTTTHTPHLLPLS) are disordered. A compositionally biased stretch (polar residues) spans 310-319 (QPPQSSTSGE). The span at 330–344 (TSSTTTHTPHLLPLS) shows a compositional bias: low complexity.

It is found in the nucleus. Its function is as follows. Probable transcription factor involved in phosphate signaling in roots. The sequence is that of Transcription factor HHO3 from Arabidopsis thaliana (Mouse-ear cress).